A 323-amino-acid chain; its full sequence is ComG operon protein 2 (323 aa).

3 helical membrane passes run 93–113, 143–163, and 296–316; these read YPLF…SIII, LVII…WLVF, and MIYG…LVPM.

Belongs to the GSP F family.

Its subcellular location is the cell membrane. Functionally, required for transformation and DNA binding. In Bacillus subtilis (strain 168), this protein is ComG operon protein 2 (comGB).